Reading from the N-terminus, the 155-residue chain is MSRKGSTPQRNVLPDPKYGSETIARFINMVMKSGKKSVAEKIVYGAMNVIGEKNSNAIELLQKALDNVSPAVEVKSRRVGGATYQVPVEVRASRRMALAMRWLIDSSRKRGENSMPHKLAAELLDASESRGGAIKKREETHRMAEANKAFAHYRW.

This sequence belongs to the universal ribosomal protein uS7 family. In terms of assembly, part of the 30S ribosomal subunit. Contacts proteins S9 and S11.

One of the primary rRNA binding proteins, it binds directly to 16S rRNA where it nucleates assembly of the head domain of the 30S subunit. Is located at the subunit interface close to the decoding center, probably blocks exit of the E-site tRNA. The chain is Small ribosomal subunit protein uS7 from Xylella fastidiosa (strain 9a5c).